The following is a 131-amino-acid chain: Small ribosomal subunit protein uS8 (131 aa).

Belongs to the universal ribosomal protein uS8 family. As to quaternary structure, part of the 30S ribosomal subunit. Contacts proteins S5 and S12.

Functionally, one of the primary rRNA binding proteins, it binds directly to 16S rRNA central domain where it helps coordinate assembly of the platform of the 30S subunit. This Pelagibacter ubique (strain HTCC1062) protein is Small ribosomal subunit protein uS8.